Here is a 298-residue protein sequence, read N- to C-terminus: Glycine--tRNA ligase alpha subunit (298 aa).

The protein belongs to the class-II aminoacyl-tRNA synthetase family. In terms of assembly, tetramer of two alpha and two beta subunits.

Its subcellular location is the cytoplasm. The enzyme catalyses tRNA(Gly) + glycine + ATP = glycyl-tRNA(Gly) + AMP + diphosphate. This Helicobacter acinonychis (strain Sheeba) protein is Glycine--tRNA ligase alpha subunit.